A 412-amino-acid polypeptide reads, in one-letter code: Peptidase T (412 aa).

Zn(2+) is bound at residue His79. Asp81 is a catalytic residue. Position 142 (Asp142) interacts with Zn(2+). Glu176 serves as the catalytic Proton acceptor. Glu177, Asp199, and His381 together coordinate Zn(2+).

The protein belongs to the peptidase M20B family. It depends on Zn(2+) as a cofactor.

The protein resides in the cytoplasm. The catalysed reaction is Release of the N-terminal residue from a tripeptide.. Functionally, cleaves the N-terminal amino acid of tripeptides. This chain is Peptidase T, found in Exiguobacterium sp. (strain ATCC BAA-1283 / AT1b).